A 209-amino-acid polypeptide reads, in one-letter code: Nascent polypeptide-associated complex subunit alpha-like protein 5 (209 aa).

Positions 23 to 71 (EKEDDVVVEDVKDGEEEDDDEDDEDVEVEGEGGNENAKQSRSEKKSRKA) are disordered. Residues 25-54 (EDDVVVEDVKDGEEEDDDEDDEDVEVEGEG) show a composition bias toward acidic residues. An NAC-A/B domain is found at 62–127 (SRSEKKSRKA…AKVDDLSSQL (66 aa)). One can recognise a UBA domain in the interval 170 to 207 (VEARDIDLVMTQAGVSKAKAVSALKANDGDIVSAIMEL).

This sequence belongs to the NAC-alpha family.

May promote appropriate targeting of ribosome-nascent polypeptide complexes. The polypeptide is Nascent polypeptide-associated complex subunit alpha-like protein 5 (Arabidopsis thaliana (Mouse-ear cress)).